A 135-amino-acid chain; its full sequence is Small ribosomal subunit protein uS11 (135 aa).

A compositionally biased stretch (low complexity) spans 1–11; it reads MPPKARAGAAV. The tract at residues 1–22 is disordered; sequence MPPKARAGAAVKKVRRKERKNV.

Belongs to the universal ribosomal protein uS11 family. In terms of assembly, part of the 30S ribosomal subunit. Interacts with proteins S7 and S18. Binds to IF-3.

Functionally, located on the platform of the 30S subunit, it bridges several disparate RNA helices of the 16S rRNA. Forms part of the Shine-Dalgarno cleft in the 70S ribosome. The polypeptide is Small ribosomal subunit protein uS11 (Salinispora tropica (strain ATCC BAA-916 / DSM 44818 / JCM 13857 / NBRC 105044 / CNB-440)).